The following is a 261-amino-acid chain: Guanine nucleotide exchange factor BopE (261 aa).

A compositionally biased stretch (basic and acidic residues) spans 241–253 (RRAAQDASRDEKG). The interval 241–261 (RRAAQDASRDEKGAANAADGA) is disordered.

This sequence belongs to the GEF (guanine exchange factor) SopE family. In terms of assembly, monomer. Interacts with human CDC42.

It localises to the secreted. Activator for both CDC42 and RAC1 by directly interacting with these Rho GTPases and acting as a guanine nucleotide exchange factor (GEF). This activation results in actin cytoskeleton rearrangements and stimulates membrane ruffling, thus promoting bacterial entry into non-phagocytic cells. This Burkholderia thailandensis (strain ATCC 700388 / DSM 13276 / CCUG 48851 / CIP 106301 / E264) protein is Guanine nucleotide exchange factor BopE (bopE).